The primary structure comprises 424 residues: UPF0597 protein Sbal_3070 (424 aa).

This sequence belongs to the UPF0597 family.

This is UPF0597 protein Sbal_3070 from Shewanella baltica (strain OS155 / ATCC BAA-1091).